An 83-amino-acid chain; its full sequence is Short neurotoxin 1 (83 aa).

An N-terminal signal peptide occupies residues 1-21 (MKTLLLTLVVVTIVCLDLGYT). Intrachain disulfides connect Cys-24–Cys-45, Cys-38–Cys-62, Cys-64–Cys-75, and Cys-76–Cys-81.

This sequence belongs to the three-finger toxin family. Short-chain subfamily. Type I alpha-neurotoxin sub-subfamily. As to expression, expressed by the venom gland.

The protein localises to the secreted. Binds to muscle nicotinic acetylcholine receptor (nAChR) and inhibit acetylcholine from binding to the receptor, thereby impairing neuromuscular transmission. In Oxyuranus scutellatus scutellatus (Australian taipan), this protein is Short neurotoxin 1.